The chain runs to 130 residues: uncharacterized protein (130 aa).

Residues 41 to 64 (DDKDDHMDNQPKTSQTSKKVKLSE) are disordered.

This is an uncharacterized protein from Streptococcus pyogenes serotype M6 (strain ATCC BAA-946 / MGAS10394).